The primary structure comprises 361 residues: Phospho-N-acetylmuramoyl-pentapeptide-transferase (361 aa).

The next 10 helical transmembrane spans lie at 27 to 47 (ILAS…MIRW), 70 to 90 (GTPT…CLLW), 97 to 117 (SLWL…VDDY), 134 to 154 (YFWQ…NASL), 167 to 187 (TVTW…IVGS), 199 to 219 (GLAI…AYAS), 236 to 256 (TGEL…FLWY), 263 to 283 (VFMG…VAIV), 288 to 308 (LVLL…ILQV), and 338 to 358 (KVIV…LATL).

It belongs to the glycosyltransferase 4 family. MraY subfamily. Requires Mg(2+) as cofactor.

Its subcellular location is the cell inner membrane. The catalysed reaction is UDP-N-acetyl-alpha-D-muramoyl-L-alanyl-gamma-D-glutamyl-meso-2,6-diaminopimeloyl-D-alanyl-D-alanine + di-trans,octa-cis-undecaprenyl phosphate = di-trans,octa-cis-undecaprenyl diphospho-N-acetyl-alpha-D-muramoyl-L-alanyl-D-glutamyl-meso-2,6-diaminopimeloyl-D-alanyl-D-alanine + UMP. Its pathway is cell wall biogenesis; peptidoglycan biosynthesis. Catalyzes the initial step of the lipid cycle reactions in the biosynthesis of the cell wall peptidoglycan: transfers peptidoglycan precursor phospho-MurNAc-pentapeptide from UDP-MurNAc-pentapeptide onto the lipid carrier undecaprenyl phosphate, yielding undecaprenyl-pyrophosphoryl-MurNAc-pentapeptide, known as lipid I. This chain is Phospho-N-acetylmuramoyl-pentapeptide-transferase, found in Legionella pneumophila (strain Paris).